The sequence spans 280 residues: Eukaryotic translation initiation factor 3 subunit F-1 (280 aa).

Residues 8–138 enclose the MPN domain; that stretch reads VRVHPVVLFQ…LRSYVCIQLG (131 aa).

Belongs to the eIF-3 subunit F family. Component of the eukaryotic translation initiation factor 3 (eIF-3) complex. The eIF-3 complex interacts with pix.

It localises to the cytoplasm. Its function is as follows. Component of the eukaryotic translation initiation factor 3 (eIF-3) complex, which is involved in protein synthesis of a specialized repertoire of mRNAs and, together with other initiation factors, stimulates binding of mRNA and methionyl-tRNAi to the 40S ribosome. The eIF-3 complex specifically targets and initiates translation of a subset of mRNAs involved in cell proliferation. The protein is Eukaryotic translation initiation factor 3 subunit F-1 of Drosophila persimilis (Fruit fly).